The primary structure comprises 204 residues: Inositol diphosphatase DSP2 (204 aa).

The interval 1-27 (MQLEISPRQRSQQQKEEEGEHQQRAGE) is disordered. The span at 13 to 27 (QQKEEEGEHQQRAGE) shows a compositional bias: basic and acidic residues. A Tyrosine-protein phosphatase domain is found at 51–203 (NFAEVNDGIF…SSLMHLTASQ (153 aa)). The interval 107 to 119 (FGIDGSKELLVNI) is WPD loop important for active site topology. 3 residues coordinate 1D-myo-inositol hexakisphosphate: N118, I119, and K123. Residue C143 is the Phosphocysteine intermediate of the active site.

It belongs to the protein-tyrosine phosphatase family. Atypical dual-specificity phosphatase Siw14-like subfamily. In terms of tissue distribution, expressed in roots and young panicles.

It localises to the cytoplasm. Its subcellular location is the nucleus. The enzyme catalyses 5-diphospho-1D-myo-inositol 1,2,3,4,6-pentakisphosphate + H2O = 1D-myo-inositol hexakisphosphate + phosphate + H(+). It catalyses the reaction 1,5-bis(diphospho)-1D-myo-inositol 2,3,4,6-tetrakisphosphate + H2O = 1-diphospho-1D-myo-inositol 2,3,4,5,6-pentakisphosphate + phosphate + 2 H(+). The catalysed reaction is 3,5-bis(diphospho)-1D-myo-inositol 1,2,4,6-tetrakisphosphate + H2O = 3-diphospho-1D-myo-inositol 1,2,4,5,6-pentakisphosphate + phosphate + 2 H(+). It carries out the reaction 6-diphospho-1D-myo-inositol pentakisphosphate + H2O = 1D-myo-inositol hexakisphosphate + phosphate + H(+). Functionally, cleaves the beta-phosphate at the 5-position of soluble inositol pyrophosphates. Has highest activity on 5-diphosphoinositol 1,2,3,4,6-pentakisphosphate (5-InsP(7)). Acts as a negative regulator of defense responses against the fungal pathogen Magnaporthe oryzae. This is Inositol diphosphatase DSP2 from Oryza sativa subsp. japonica (Rice).